The chain runs to 262 residues: Acyl-[acyl-carrier-protein]--UDP-N-acetylglucosamine O-acyltransferase (262 aa).

The protein belongs to the transferase hexapeptide repeat family. LpxA subfamily. In terms of assembly, homotrimer.

The protein localises to the cytoplasm. The catalysed reaction is a (3R)-hydroxyacyl-[ACP] + UDP-N-acetyl-alpha-D-glucosamine = a UDP-3-O-[(3R)-3-hydroxyacyl]-N-acetyl-alpha-D-glucosamine + holo-[ACP]. The protein operates within glycolipid biosynthesis; lipid IV(A) biosynthesis; lipid IV(A) from (3R)-3-hydroxytetradecanoyl-[acyl-carrier-protein] and UDP-N-acetyl-alpha-D-glucosamine: step 1/6. Involved in the biosynthesis of lipid A, a phosphorylated glycolipid that anchors the lipopolysaccharide to the outer membrane of the cell. The protein is Acyl-[acyl-carrier-protein]--UDP-N-acetylglucosamine O-acyltransferase of Wigglesworthia glossinidia brevipalpis.